The sequence spans 835 residues: Protein translocase subunit SecA (835 aa).

Residues Gln85, 103–107 (GEGKT), and Asp492 each bind ATP. The tract at residues 788 to 807 (VQGEAVHPSSDGEEAKKKPV) is disordered. 4 residues coordinate Zn(2+): Cys819, Cys821, Cys830, and Cys831.

It belongs to the SecA family. Monomer and homodimer. Part of the essential Sec protein translocation apparatus which comprises SecA, SecYEG and auxiliary proteins SecDF. Other proteins may also be involved. Zn(2+) is required as a cofactor.

The protein localises to the cell membrane. It is found in the cytoplasm. The catalysed reaction is ATP + H2O + cellular proteinSide 1 = ADP + phosphate + cellular proteinSide 2.. Functionally, part of the Sec protein translocase complex. Interacts with the SecYEG preprotein conducting channel. Has a central role in coupling the hydrolysis of ATP to the transfer of proteins into and across the cell membrane, serving as an ATP-driven molecular motor driving the stepwise translocation of polypeptide chains across the membrane. This is Protein translocase subunit SecA from Bacillus cereus (strain ATCC 14579 / DSM 31 / CCUG 7414 / JCM 2152 / NBRC 15305 / NCIMB 9373 / NCTC 2599 / NRRL B-3711).